The chain runs to 669 residues: Heat shock 70 kDa protein BIP3 (669 aa).

The first 32 residues, 1–32, serve as a signal peptide directing secretion; sequence MARGATWTRRLHLHGLFLAVLLLLTLPAGSTA. Asparagine 423 carries N-linked (GlcNAc...) asparagine glycosylation. The disordered stretch occupies residues 646–669; sequence AVYQRSGGSRRDGDGGGDDDHDEL. A compositionally biased stretch (acidic residues) spans 660–669; sequence GGGDDDHDEL. The Prevents secretion from ER motif lies at 666-669; sequence HDEL.

This sequence belongs to the heat shock protein 70 family.

The protein resides in the endoplasmic reticulum. Functionally, functions as a chaperone during endoplasmic reticulum (ER) stress response. In Oryza sativa subsp. japonica (Rice), this protein is Heat shock 70 kDa protein BIP3.